A 175-amino-acid chain; its full sequence is Large ribosomal subunit protein uL6 (175 aa).

Belongs to the universal ribosomal protein uL6 family. Part of the 50S ribosomal subunit.

In terms of biological role, this protein binds to the 23S rRNA, and is important in its secondary structure. It is located near the subunit interface in the base of the L7/L12 stalk, and near the tRNA binding site of the peptidyltransferase center. The protein is Large ribosomal subunit protein uL6 of Xylella fastidiosa (strain M12).